Reading from the N-terminus, the 498-residue chain is ATP synthase subunit beta, chloroplastic (498 aa).

172 to 179 (GGAGVGKT) is an ATP binding site.

Belongs to the ATPase alpha/beta chains family. As to quaternary structure, F-type ATPases have 2 components, CF(1) - the catalytic core - and CF(0) - the membrane proton channel. CF(1) has five subunits: alpha(3), beta(3), gamma(1), delta(1), epsilon(1). CF(0) has four main subunits: a(1), b(1), b'(1) and c(9-12).

It localises to the plastid. The protein resides in the chloroplast thylakoid membrane. It catalyses the reaction ATP + H2O + 4 H(+)(in) = ADP + phosphate + 5 H(+)(out). Functionally, produces ATP from ADP in the presence of a proton gradient across the membrane. The catalytic sites are hosted primarily by the beta subunits. The chain is ATP synthase subunit beta, chloroplastic from Salacca zalacca (Snake palm).